The chain runs to 191 residues: Peptidyl-tRNA hydrolase (191 aa).

A tRNA-binding site is contributed by Tyr-15. Residue His-20 is the Proton acceptor of the active site. 3 residues coordinate tRNA: Phe-66, Asn-68, and Asn-114.

It belongs to the PTH family. In terms of assembly, monomer.

It is found in the cytoplasm. The catalysed reaction is an N-acyl-L-alpha-aminoacyl-tRNA + H2O = an N-acyl-L-amino acid + a tRNA + H(+). In terms of biological role, hydrolyzes ribosome-free peptidyl-tRNAs (with 1 or more amino acids incorporated), which drop off the ribosome during protein synthesis, or as a result of ribosome stalling. Its function is as follows. Catalyzes the release of premature peptidyl moieties from peptidyl-tRNA molecules trapped in stalled 50S ribosomal subunits, and thus maintains levels of free tRNAs and 50S ribosomes. The protein is Peptidyl-tRNA hydrolase of Streptococcus agalactiae serotype Ia (strain ATCC 27591 / A909 / CDC SS700).